The following is a 311-amino-acid chain: Heparan sulfate glucosamine 3-O-sulfotransferase 1 (311 aa).

Positions 1–20 are cleaved as a signal peptide; the sequence is MTLLLLGAVLLVAQPQLVHS. N-linked (GlcNAc...) asparagine glycosylation occurs at Asn52. 3'-phosphoadenylyl sulfate is bound by residues 68–72, Arg151, and Ser159; that span reads KGGTR. N-linked (GlcNAc...) asparagine glycosylation is found at Asn196, Asn246, and Asn253. Position 259 (Tyr259) interacts with 3'-phosphoadenylyl sulfate. Cys260 and Cys269 are joined by a disulfide. Residue 274–278 coordinates 3'-phosphoadenylyl sulfate; the sequence is KGRAH.

This sequence belongs to the sulfotransferase 1 family.

It localises to the golgi apparatus lumen. The catalysed reaction is alpha-D-glucosaminyl-[heparan sulfate](n) + 3'-phosphoadenylyl sulfate = 3-sulfo-alpha-D-glucosaminyl-[heparan sulfate](n) + adenosine 3',5'-bisphosphate + H(+). Sulfotransferase that utilizes 3'-phospho-5'-adenylyl sulfate (PAPS) to catalyze the transfer of a sulfo group to position 3 of glucosamine residues in heparan. Catalyzes the rate limiting step in the biosynthesis of heparan sulfate (HSact). This modification is a crucial step in the biosynthesis of anticoagulant heparan sulfate as it completes the structure of the antithrombin pentasaccharide binding site. The chain is Heparan sulfate glucosamine 3-O-sulfotransferase 1 (Hs3st1) from Mus musculus (Mouse).